A 275-amino-acid chain; its full sequence is Large ribosomal subunit protein uL2 (275 aa).

The disordered stretch occupies residues 212-275; the sequence is NRHRGIRPQT…DKLIISRRKK (64 aa). Residues 257 to 275 are compositionally biased toward basic residues; that stretch reads YKTRRKKPSDKLIISRRKK.

The protein belongs to the universal ribosomal protein uL2 family. Part of the 50S ribosomal subunit. Forms a bridge to the 30S subunit in the 70S ribosome.

One of the primary rRNA binding proteins. Required for association of the 30S and 50S subunits to form the 70S ribosome, for tRNA binding and peptide bond formation. It has been suggested to have peptidyltransferase activity; this is somewhat controversial. Makes several contacts with the 16S rRNA in the 70S ribosome. This chain is Large ribosomal subunit protein uL2, found in Nitratiruptor sp. (strain SB155-2).